A 397-amino-acid polypeptide reads, in one-letter code: Tryptophan synthase beta chain (397 aa).

Residue Lys-90 is modified to N6-(pyridoxal phosphate)lysine.

It belongs to the TrpB family. As to quaternary structure, tetramer of two alpha and two beta chains. It depends on pyridoxal 5'-phosphate as a cofactor.

It carries out the reaction (1S,2R)-1-C-(indol-3-yl)glycerol 3-phosphate + L-serine = D-glyceraldehyde 3-phosphate + L-tryptophan + H2O. Its pathway is amino-acid biosynthesis; L-tryptophan biosynthesis; L-tryptophan from chorismate: step 5/5. The beta subunit is responsible for the synthesis of L-tryptophan from indole and L-serine. The chain is Tryptophan synthase beta chain from Nitrosomonas europaea (strain ATCC 19718 / CIP 103999 / KCTC 2705 / NBRC 14298).